The primary structure comprises 426 residues: PI-PLC X domain-containing protein At5g67130 (426 aa).

The signal sequence occupies residues 1–28 (MSACINGLCRAVTVSLLLLLLSFSFSSA). The region spanning 76 to 232 (IINGLPFNKY…MVQENHRLLV (157 aa)) is the PI-PLC X-box domain. N-linked (GlcNAc...) asparagine glycans are attached at residues Asn-151 and Asn-255. Residues 258-277 (GDPGVKRGSCPNRKESQPLN) are disordered. Asn-370 carries an N-linked (GlcNAc...) asparagine glycan. Ser-404 carries GPI-anchor amidated serine lipidation. Residues 405 to 426 (VAQLNNIVVFCFSLLPLLIFLL) constitute a propeptide, removed in mature form.

It localises to the cell membrane. This chain is PI-PLC X domain-containing protein At5g67130, found in Arabidopsis thaliana (Mouse-ear cress).